A 756-amino-acid polypeptide reads, in one-letter code: Cellulose synthase catalytic subunit [UDP-forming] (756 aa).

4 helical membrane-spanning segments follow: residues 27–47 (ASYIVGALGLCALIAATTVTL), 49–69 (NNEQLIVAAVCVVIFFVVGRG), 106–126 (GILGVILLMAELYALYMLFLS), and 167–187 (LTVLGALGIDWPPDKVNVYIL). A catalytic subdomain A region spans residues 147-242 (DWPTVDIFIP…YILILDCDHI (96 aa)). Aspartate 189 is an active-site residue. The substrate site is built by aspartate 238 and aspartate 240. Positions 319-379 (EAIESIGGFA…GQRMRWARGM (61 aa)) are catalytic subdomain B. The active site involves aspartate 335. The next 5 helical transmembrane spans lie at 409 to 429 (FFFAIPRVIFLASPLAFLFAG), 432 to 452 (IIAAAPLAVAAYALPHMFHSI), 470 to 490 (VYETTMALFLVRVTIVTLLFP), 517 to 537 (NIIFATIMMGGLLIGLFELIV), and 551 to 571 (LLNCAWALISLIILFAAIAVG). The 106-residue stretch at 576–681 (QVRYNHRVEA…ERDIVRFVFG (106 aa)) folds into the PilZ domain. The interval 721–756 (NSRPKKKPLALPVERREPTTIHSGQTQEGKISRAAS) is disordered. Residues 740-756 (TIHSGQTQEGKISRAAS) show a composition bias toward polar residues.

This sequence belongs to the glycosyltransferase 2 family. Requires Mg(2+) as cofactor.

The protein localises to the cell inner membrane. The enzyme catalyses [(1-&gt;4)-beta-D-glucosyl](n) + UDP-alpha-D-glucose = [(1-&gt;4)-beta-D-glucosyl](n+1) + UDP + H(+). Its pathway is glycan metabolism; bacterial cellulose biosynthesis. With respect to regulation, activated by bis-(3'-5') cyclic diguanylic acid (c-di-GMP). Functionally, catalytic subunit of cellulose synthase. It polymerizes uridine 5'-diphosphate glucose to cellulose. The thick cellulosic mats generated by this enzyme probably provide a specialized protective environment to the bacterium. This is Cellulose synthase catalytic subunit [UDP-forming] (bcsA) from Komagataeibacter sucrofermentans (strain ATCC 700178 / DSM 15973 / CECT 7291 / JCM 9730 / LMG 18788 / BPR 2001) (Acetobacter xylinus subsp. sucrofermentans).